A 364-amino-acid chain; its full sequence is Guanine nucleotide-binding protein alpha-6 subunit (364 aa).

The segment at 1 to 29 is disordered; that stretch reads MGAGATGLRGARLSPEERANSSKSRAIDR. Gly2 carries N-myristoyl glycine lipidation. Basic and acidic residues predominate over residues 14–29; that stretch reads SPEERANSSKSRAIDR. One can recognise a G-alpha domain in the interval 40–363; sequence NRFKILLLGT…NENLRSAGLH (324 aa). Positions 43 to 56 are G1 motif; that stretch reads KILLLGTAESGKST. Residues 48–55, 186–192, 211–215, 280–283, and Ala335 contribute to the GTP site; these read GTAESGKS, VHCRIST, DVGGQ, and NKYD. Mg(2+) contacts are provided by Ser55 and Thr192. Residues 184–192 are G2 motif; the sequence is DIVHCRIST. The tract at residues 207 to 216 is G3 motif; it reads FKMVDVGGQR. Positions 276-283 are G4 motif; that stretch reads VLFLNKYD. Residues 333–338 form a G5 motif region; it reads TTATDT.

It belongs to the G-alpha family. G proteins are composed of 3 units; alpha, beta and gamma. The alpha chain contains the guanine nucleotide binding site.

Its function is as follows. Guanine nucleotide-binding proteins (G proteins) are involved as modulators or transducers in various transmembrane signaling systems. This Caenorhabditis elegans protein is Guanine nucleotide-binding protein alpha-6 subunit (gpa-6).